Reading from the N-terminus, the 138-residue chain is Protein NrdI (138 aa).

The protein belongs to the NrdI family.

Functionally, probably involved in ribonucleotide reductase function. The sequence is that of Protein NrdI from Beutenbergia cavernae (strain ATCC BAA-8 / DSM 12333 / CCUG 43141 / JCM 11478 / NBRC 16432 / NCIMB 13614 / HKI 0122).